Consider the following 405-residue polypeptide: Riboflavin biosynthesis protein RibBA (405 aa).

The DHBP synthase stretch occupies residues 1 to 205; it reads MSEIQLNTIE…IKDLIAYRLR (205 aa). D-ribulose 5-phosphate contacts are provided by residues 30–31, aspartate 35, 144–148, and glutamate 168; these read RE and RAGHT. Glutamate 31 contacts Mg(2+). Histidine 147 serves as a coordination point for Mg(2+). The interval 206–405 is GTP cyclohydrolase II; sequence TESIVENGVE…RMGHVLHNIK (200 aa). Position 256 to 260 (256 to 260) interacts with GTP; sequence RVHSS. 3 residues coordinate Zn(2+): cysteine 261, cysteine 272, and cysteine 274. GTP is bound by residues glutamine 277, 299-301, and threonine 321; that span reads EGR. Aspartate 333 serves as the catalytic Proton acceptor; for GTP cyclohydrolase activity. The active-site Nucleophile; for GTP cyclohydrolase activity is the arginine 335. GTP contacts are provided by serine 356 and lysine 361.

The protein in the N-terminal section; belongs to the DHBP synthase family. In the C-terminal section; belongs to the GTP cyclohydrolase II family. Mg(2+) is required as a cofactor. Mn(2+) serves as cofactor. Requires Zn(2+) as cofactor.

It carries out the reaction D-ribulose 5-phosphate = (2S)-2-hydroxy-3-oxobutyl phosphate + formate + H(+). It catalyses the reaction GTP + 4 H2O = 2,5-diamino-6-hydroxy-4-(5-phosphoribosylamino)-pyrimidine + formate + 2 phosphate + 3 H(+). Its pathway is cofactor biosynthesis; riboflavin biosynthesis; 2-hydroxy-3-oxobutyl phosphate from D-ribulose 5-phosphate: step 1/1. It functions in the pathway cofactor biosynthesis; riboflavin biosynthesis; 5-amino-6-(D-ribitylamino)uracil from GTP: step 1/4. In terms of biological role, catalyzes the conversion of D-ribulose 5-phosphate to formate and 3,4-dihydroxy-2-butanone 4-phosphate. Catalyzes the conversion of GTP to 2,5-diamino-6-ribosylamino-4(3H)-pyrimidinone 5'-phosphate (DARP), formate and pyrophosphate. The sequence is that of Riboflavin biosynthesis protein RibBA from Parabacteroides distasonis (strain ATCC 8503 / DSM 20701 / CIP 104284 / JCM 5825 / NCTC 11152).